Here is a 459-residue protein sequence, read N- to C-terminus: Interleukin-7 receptor subunit alpha (459 aa).

The signal sequence occupies residues 1–20 (MTILGTTFGMVFSLLQVVSG). The Extracellular portion of the chain corresponds to 21–239 (ESGYAQNGDL…EINNSSGEMD (219 aa)). Cys42 and Cys57 form a disulfide bridge. Residues Asn49 and Asn65 are each glycosylated (N-linked (GlcNAc...) asparagine). 2 cysteine pairs are disulfide-bonded: Cys74/Cys82 and Cys108/Cys118. Residues 131–231 (APFDLSVVYR…PSYYFRTPEI (101 aa)) enclose the Fibronectin type-III domain. N-linked (GlcNAc...) asparagine glycosylation is found at Asn151 and Asn182. The WSXWS motif motif lies at 217–221 (WSEWS). Asn232 and Asn233 each carry an N-linked (GlcNAc...) asparagine glycan. A helical membrane pass occupies residues 240–264 (PILLTISILSFFSVALLVILACVLW). The Cytoplasmic segment spans residues 265 to 459 (KKRIKPIVWP…VTMSSFYQNQ (195 aa)). The short motif at 272–280 (VWPSLPDHK) is the Box 1 motif element. At Thr282 the chain carries Phosphothreonine; by PKC.

This sequence belongs to the type I cytokine receptor family. Type 4 subfamily. As to quaternary structure, the IL7 receptor is a heterodimer of IL7R and IL2RG. The TSLP receptor is a heterodimer of CRLF2 and IL7R. Interacts with CD53. In terms of processing, N-glycosylated IL-7Ralpha binds IL7 300-fold more tightly than the unglycosylated form. Post-translationally, ubiquitinated by MARCHF8; leading to lysosomal degradation.

The protein resides in the cell membrane. It is found in the secreted. Its function is as follows. Receptor for interleukin-7. Also acts as a receptor for thymic stromal lymphopoietin (TSLP). The protein is Interleukin-7 receptor subunit alpha (IL7R) of Homo sapiens (Human).